The chain runs to 364 residues: Protein-glutamate methylesterase/protein-glutamine glutaminase 1 (364 aa).

The region spanning 6–123 (KVLCVDDSAL…RDGMLDYSEK (118 aa)) is the Response regulatory domain. Asp-57 is modified (4-aspartylphosphate). A CheB-type methylesterase domain is found at 165-357 (LVSTEKLIIV…RRIMARLASM (193 aa)). Catalysis depends on residues Ser-177, His-203, and Asp-299.

Belongs to the CheB family. Post-translationally, phosphorylated by CheA. Phosphorylation of the N-terminal regulatory domain activates the methylesterase activity.

It localises to the cytoplasm. The enzyme catalyses [protein]-L-glutamate 5-O-methyl ester + H2O = L-glutamyl-[protein] + methanol + H(+). It catalyses the reaction L-glutaminyl-[protein] + H2O = L-glutamyl-[protein] + NH4(+). In terms of biological role, involved in chemotaxis. Part of a chemotaxis signal transduction system that modulates chemotaxis in response to various stimuli. Catalyzes the demethylation of specific methylglutamate residues introduced into the chemoreceptors (methyl-accepting chemotaxis proteins or MCP) by CheR. Also mediates the irreversible deamidation of specific glutamine residues to glutamic acid. This chain is Protein-glutamate methylesterase/protein-glutamine glutaminase 1, found in Burkholderia mallei (strain ATCC 23344).